Consider the following 154-residue polypeptide: Ribosomal RNA large subunit methyltransferase H (154 aa).

S-adenosyl-L-methionine is bound by residues L76, G103, and 122-127 (LSPLTL).

Belongs to the RNA methyltransferase RlmH family. Homodimer.

It localises to the cytoplasm. It catalyses the reaction pseudouridine(1915) in 23S rRNA + S-adenosyl-L-methionine = N(3)-methylpseudouridine(1915) in 23S rRNA + S-adenosyl-L-homocysteine + H(+). Specifically methylates the pseudouridine at position 1915 (m3Psi1915) in 23S rRNA. This is Ribosomal RNA large subunit methyltransferase H from Wolinella succinogenes (strain ATCC 29543 / DSM 1740 / CCUG 13145 / JCM 31913 / LMG 7466 / NCTC 11488 / FDC 602W) (Vibrio succinogenes).